A 307-amino-acid polypeptide reads, in one-letter code: MTRHFLRDDDLSPAEQAEVLDLAVQLKRERWSERPLAGPQTVAVIFDKSSTRTRVSFAVGIADLGGVPLVISTANSQLGGKETASDTARVLERQVAAIVWRTYAQSGLEEMAAGTTVPVVNALSDDFHPCQILADLLTIREHRGDLAGQTLVFLGDGASNMAHSYLLGGVTAGMHVRIAAPAGYVPAAVVVADAERIAATTGGSVRILADPVEAVTGADVVITDTWVSMGREEEKAQRLAELGAYQVTTELMAHAVDDAIFLHCLPADREYEVAAEVIDGPQSVVWDEAENRLHAQKALLVWLLRQS.

Carbamoyl phosphate is bound by residues 50–53, glutamine 77, arginine 101, and 128–131; these read STRT and HPCQ. L-ornithine is bound by residues asparagine 160, aspartate 224, and 228 to 229; that span reads SM. Carbamoyl phosphate is bound by residues 264 to 265 and arginine 292; that span reads CL.

It belongs to the aspartate/ornithine carbamoyltransferase superfamily. OTCase family.

It is found in the cytoplasm. It carries out the reaction carbamoyl phosphate + L-ornithine = L-citrulline + phosphate + H(+). The protein operates within amino-acid biosynthesis; L-arginine biosynthesis; L-arginine from L-ornithine and carbamoyl phosphate: step 1/3. Its function is as follows. Reversibly catalyzes the transfer of the carbamoyl group from carbamoyl phosphate (CP) to the N(epsilon) atom of ornithine (ORN) to produce L-citrulline. In Clavibacter sepedonicus (Clavibacter michiganensis subsp. sepedonicus), this protein is Ornithine carbamoyltransferase.